Consider the following 663-residue polypeptide: UvrABC system protein B (663 aa).

The region spanning 30–414 (EGIKAGKRHQ…IEHTDKMVEQ (385 aa)) is the Helicase ATP-binding domain. 43–50 (GATGTGKT) is a binding site for ATP. The Beta-hairpin signature appears at 96–119 (YYDYYQPEAYVPSTDTFIEKDASI). The 167-residue stretch at 434-600 (QIDDLLSEIQ…TINKKIHDLI (167 aa)) folds into the Helicase C-terminal domain. The region spanning 627-662 (QKTIDNIEKEMKQAAKDLDFEKATELRDMLFELKAE) is the UVR domain.

The protein belongs to the UvrB family. In terms of assembly, forms a heterotetramer with UvrA during the search for lesions. Interacts with UvrC in an incision complex.

It is found in the cytoplasm. Functionally, the UvrABC repair system catalyzes the recognition and processing of DNA lesions. A damage recognition complex composed of 2 UvrA and 2 UvrB subunits scans DNA for abnormalities. Upon binding of the UvrA(2)B(2) complex to a putative damaged site, the DNA wraps around one UvrB monomer. DNA wrap is dependent on ATP binding by UvrB and probably causes local melting of the DNA helix, facilitating insertion of UvrB beta-hairpin between the DNA strands. Then UvrB probes one DNA strand for the presence of a lesion. If a lesion is found the UvrA subunits dissociate and the UvrB-DNA preincision complex is formed. This complex is subsequently bound by UvrC and the second UvrB is released. If no lesion is found, the DNA wraps around the other UvrB subunit that will check the other stand for damage. The chain is UvrABC system protein B from Staphylococcus aureus (strain MSSA476).